A 716-amino-acid chain; its full sequence is UvrABC system protein C (716 aa).

A GIY-YIG domain is found at alanine 14–isoleucine 94. One can recognise a UVR domain in the interval threonine 206–serine 241.

This sequence belongs to the UvrC family. As to quaternary structure, interacts with UvrB in an incision complex.

The protein localises to the cytoplasm. Functionally, the UvrABC repair system catalyzes the recognition and processing of DNA lesions. UvrC both incises the 5' and 3' sides of the lesion. The N-terminal half is responsible for the 3' incision and the C-terminal half is responsible for the 5' incision. The polypeptide is UvrABC system protein C (Anaeromyxobacter sp. (strain Fw109-5)).